A 213-amino-acid polypeptide reads, in one-letter code: Major fimbrial subunit (213 aa).

Residues 1–20 form the signal peptide; that stretch reads MKKTLLGSLILLAFAGNVQA. Cys41 and Cys81 are disulfide-bonded.

It belongs to the fimbrial protein family.

It is found in the fimbrium. Functionally, mediates adherence to oropharyngeal epithelial cells. Helps the airway colonization process. The sequence is that of Major fimbrial subunit (hifA) from Haemophilus influenzae.